We begin with the raw amino-acid sequence, 331 residues long: Protein mono-ADP-ribosyltransferase PARP11 (331 aa).

Lys11 is subject to N6-(ADP-ribosyl)lysine. A WWE domain is found at 15 to 99 (SDVDDMDTSD…VTGKQRLIKR (85 aa)). Residues Cys49 and Cys65 each carry the ADP-ribosylcysteine modification. Asp80 carries the post-translational modification ADP-ribosyl aspartic acid. The PARP catalytic domain occupies 116–331 (IPMPTHWENV…IYPEYLIDFH (216 aa)).

The protein belongs to the ARTD/PARP family. In terms of processing, auto-mono-ADP-ribosylated. Predominantly expressed in testis, preferentially in postmeiotic germ cells. Also detectable in other tissues, including liver, lung, spleen, thymus and brain.

The protein resides in the nucleus. It is found in the nuclear pore complex. It catalyses the reaction L-aspartyl-[protein] + NAD(+) = 4-O-(ADP-D-ribosyl)-L-aspartyl-[protein] + nicotinamide. The enzyme catalyses L-cysteinyl-[protein] + NAD(+) = S-(ADP-D-ribosyl)-L-cysteinyl-[protein] + nicotinamide + H(+). It carries out the reaction L-glutamyl-[protein] + NAD(+) = 5-O-(ADP-D-ribosyl)-L-glutamyl-[protein] + nicotinamide. The catalysed reaction is L-lysyl-[protein] + NAD(+) = N(6)-(ADP-D-ribosyl)-L-lysyl-[protein] + nicotinamide + H(+). Its function is as follows. Mono-ADP-ribosyltransferase that mediates mono-ADP-ribosylation of target proteins. Plays a role in nuclear envelope stability and nuclear remodeling during spermiogenesis. Inhibits the type I interferon activated signaling pathway. Mechanistically, mono-ADP-ribosylates beta-TrCP/BTRC to promote IFNAR1 ubiquitination and protect BTRC from ubiquitin-proteasome degradation. The polypeptide is Protein mono-ADP-ribosyltransferase PARP11 (Mus musculus (Mouse)).